The sequence spans 509 residues: Aspartyl/glutamyl-tRNA(Asn/Gln) amidotransferase subunit B (509 aa).

The protein belongs to the GatB/GatE family. GatB subfamily. As to quaternary structure, heterotrimer of A, B and C subunits.

It carries out the reaction L-glutamyl-tRNA(Gln) + L-glutamine + ATP + H2O = L-glutaminyl-tRNA(Gln) + L-glutamate + ADP + phosphate + H(+). The catalysed reaction is L-aspartyl-tRNA(Asn) + L-glutamine + ATP + H2O = L-asparaginyl-tRNA(Asn) + L-glutamate + ADP + phosphate + 2 H(+). In terms of biological role, allows the formation of correctly charged Asn-tRNA(Asn) or Gln-tRNA(Gln) through the transamidation of misacylated Asp-tRNA(Asn) or Glu-tRNA(Gln) in organisms which lack either or both of asparaginyl-tRNA or glutaminyl-tRNA synthetases. The reaction takes place in the presence of glutamine and ATP through an activated phospho-Asp-tRNA(Asn) or phospho-Glu-tRNA(Gln). The sequence is that of Aspartyl/glutamyl-tRNA(Asn/Gln) amidotransferase subunit B from Mycobacterium leprae (strain Br4923).